The sequence spans 193 residues: MNPLQEVIFCRQFGNQHRVPKPYYRRKTYLCYQLKLPEGTLIHKDCLRNKKKRHAEMCFIDKIKALTRDTSQRFEIICYITWSPCPFCAEELVAFVKDNPHLSLRIFASRLYVHWRWKYQQGLRHLHASGIPVAVMSLPEFEDCWRNFVDHQDRSFQPWPNLDQYSKSIKRRLGKILTPLNDLRNDFRNLKLE.

A CMP/dCMP-type deaminase domain is found at 24–126 (YRRKTYLCYQ…WKYQQGLRHL (103 aa)). H54 contributes to the Zn(2+) binding site. E56 functions as the Proton donor in the catalytic mechanism. The Zn(2+) site is built by C85 and C88.

The protein belongs to the cytidine and deoxycytidylate deaminase family. Homodimer. Requires Zn(2+) as cofactor. Expressed in peripheral blood mononuclear cells.

The protein localises to the cytoplasm. The catalysed reaction is a 2'-deoxycytidine in single-stranded DNA + H2O + H(+) = a 2'-deoxyuridine in single-stranded DNA + NH4(+). Its function is as follows. DNA deaminase (cytidine deaminase) which acts as an inhibitor of retrovirus replication and retrotransposon mobility via deaminase-dependent and -independent mechanisms. Selectively targets single-stranded DNA and does not deaminate double-stranded DNA or single- or double-stranded RNA. Exhibits single-stranded DNA deaminase activity (in vitro). Incorporates into the released virions of the virion infectivity factor (vif)-deficient feline immunodeficiency virus (FIV) and suppresses FIV infectivity, probably in a deaminase-dependent manner (in vitro). Induces G-to-A hypermutations in vif-deficient FIV (in vitro). The APOBEC3H/APOBEC3Z3 haplotype 5 exhibits antiviral activity against vif-proficient FIV, strains Petaluma, C36 and Shizuoka (in vitro). Does not exhibit inhibitory activity against feline leukemia virus (FeLV), feline endogenous retrovirus (RD-114 virus) or a long interspersed nuclear element-1 (LINE-1) retrotransposon (in vitro). This is DNA dC-&gt;dU-editing enzyme APOBEC-3H from Felis catus (Cat).